The following is a 243-amino-acid chain: tRNA pseudouridine synthase A (243 aa).

Aspartate 53 functions as the Nucleophile in the catalytic mechanism. Residue tyrosine 111 participates in substrate binding.

It belongs to the tRNA pseudouridine synthase TruA family. In terms of assembly, homodimer.

The catalysed reaction is uridine(38/39/40) in tRNA = pseudouridine(38/39/40) in tRNA. In terms of biological role, formation of pseudouridine at positions 38, 39 and 40 in the anticodon stem and loop of transfer RNAs. This is tRNA pseudouridine synthase A from Chlorobium phaeovibrioides (strain DSM 265 / 1930) (Prosthecochloris vibrioformis (strain DSM 265)).